A 160-amino-acid polypeptide reads, in one-letter code: uncharacterized protein (160 aa).

3 C2H2-type zinc fingers span residues 10 to 32, 41 to 64, and 75 to 98; these read LSCL…LPTH, QTCD…KRYH, and FQCQ…KIEH. A Phosphotyrosine modification is found at Y115. S116 is subject to Phosphoserine.

It localises to the nucleus. Its function is as follows. May be involved in transcriptional regulation. This is an uncharacterized protein from Drosophila melanogaster (Fruit fly).